Here is a 333-residue protein sequence, read N- to C-terminus: Coiled-coil domain-containing protein 68 (333 aa).

Coiled-coil stretches lie at residues 86 to 120 (LDLLMENMRRKDQQLLEMNRENEVLQIKLEASREA) and 160 to 302 (EKEQ…HWTE).

In terms of assembly, interacts with CEP170.

It is found in the cytoplasm. It localises to the cytoskeleton. The protein localises to the microtubule organizing center. The protein resides in the centrosome. Its subcellular location is the centriole. In terms of biological role, centriolar protein required for centriole subdistal appendage assembly and microtubule anchoring in interphase cells. Together with CCDC120, cooperate with subdistal appendage components ODF2, NIN and CEP170 for hierarchical subdistal appendage assembly. In Mus musculus (Mouse), this protein is Coiled-coil domain-containing protein 68 (Ccdc68).